The chain runs to 363 residues: NAD-dependent epimerase/dehydratase tndE (363 aa).

A helical transmembrane segment spans residues 10–30 (GLVLITGVNGFLASHLALQLI). Residue tyrosine 176 coordinates NADP(+).

Belongs to the NAD(P)-dependent epimerase/dehydratase family. Dihydroflavonol-4-reductase subfamily.

Its subcellular location is the membrane. The protein operates within secondary metabolite biosynthesis; terpenoid biosynthesis. Functionally, NAD-dependent epimerase/dehydratase; part of the gene cluster that mediates the biosynthesis of talaronoid C, a fusicoccane diterpenoid with an unprecedented tricyclic 5/8/6 ring system. The first step in the pathway is performed by the fusicoccadiene synthase tndC that possesses both prenyl transferase and terpene cyclase activity, converting isopentenyl diphosphate and dimethylallyl diphosphate into geranylgeranyl diphosphate (GGDP) and further converting GGDP into talarodiene, a precursor for talaronoid C. The remaining enzymes from the cluster include the cytochrome P450 monooxygenase tndB, the aldehyde reductase tndE and the alcohol dehydrogenase tndF that are involved in the conversion of talarodiene into talaronoid C. This chain is NAD-dependent epimerase/dehydratase tndE, found in Aspergillus flavipes.